Here is a 2344-residue protein sequence, read N- to C-terminus: Genome polyprotein (2344 aa).

Residues 492 to 653 (QKVISDLHTM…ESWQATRHGS (162 aa)) form the SF3 helicase domain. 522-529 (GAPGIGKT) contributes to the ATP binding site. Residue Tyr1014 is modified to O-(5'-phospho-RNA)-tyrosine. Tyr1014 bears the O-UMP-tyrosine; transient mark. In terms of domain architecture, Peptidase C24 spans 1109 to 1244 (GLPGFMRHNG…SKMCTLIDLT (136 aa)). Active-site for 3CLpro activity residues include His1135, Asp1152, and Cys1212. Residues 1495 to 1619 (SDFLCLDYSK…AMTPMMVSLL (125 aa)) form the RdRp catalytic domain. An intrachain disulfide couples Cys1584 to Cys1591. A disordered region spans residues 1774–1796 (PQGEAARTATTASVPGTTTDGMD). Residues 1781-1792 (TATTASVPGTTT) show a composition bias toward low complexity.

Homodimer. As to quaternary structure, homomultimer. Interacts with host type II histo-blood group structures antigens at the surface of target cells. Requires Mn(2+) as cofactor. Specific enzymatic cleavages by its own cysteine protease yield mature proteins. The protease cleaves itself from the nascent polyprotein autocatalytically. Precursor p41 can be cleaved by viral 3CLpro into protein p19 and VPg, or cleaved by host protease into protein p23/2 and protein p18. Post-translationally, VPg is uridylylated by the polymerase and is covalently attached to the 5'-end of the polyadenylated genomic and subgenomic RNAs. This uridylylated form acts as a nucleotide-peptide primer for the polymerase.

Its subcellular location is the host cytoplasm. It localises to the host endoplasmic reticulum. The protein resides in the virion. The enzyme catalyses a ribonucleoside 5'-triphosphate + H2O = a ribonucleoside 5'-diphosphate + phosphate + H(+). The catalysed reaction is Endopeptidase with a preference for cleavage when the P1 position is occupied by Glu-|-Xaa and the P1' position is occupied by Gly-|-Yaa.. It carries out the reaction RNA(n) + a ribonucleoside 5'-triphosphate = RNA(n+1) + diphosphate. Functionally, together with NTPase and NS4, initiates the formation of the replication complex. Induces the proliferation of the host smooth ER membranes forming long tubular structures. These remodeled membranes probably form the viral factories that contain the replication complex. In terms of biological role, displays NTPase activity, but no helicase activity. Induces the formation of convoluted membranes derived from the host ER. These remodeled membranes probably form the viral factories that contain the replication complex. Together with NS2 and NS4, initiates the formation of the replication complex. Probable key protein responsible for the formation of membrane alterations by the virus. Induces the formation of convoluted membranes derived from the host ER. These remodeled membranes probably form the viral factories that contain the replication complex. Together with NS2 and NTPase, initiates the formation of the replication complex. Its function is as follows. Viral genome-linked protein is covalently linked to the 5'-end of the positive-strand, negative-strand genomic RNAs and subgenomic RNA. Acts as a genome-linked replication primer. May recruit ribosome to viral RNA thereby promoting viral proteins translation. Interacts with host translation initiation complex to allow the translation of viral proteins. Functionally, processes the polyprotein. 3CLpro-RdRp is first released by autocleavage, then all other proteins are cleaved. May cleave polyadenylate-binding protein thereby inhibiting cellular translation. In terms of biological role, replicates genomic and antigenomic RNA by recognizing replications specific signals. Also transcribes a subgenomic mRNA by initiating RNA synthesis internally on antigenomic RNA. This sgRNA codes for structural proteins. Catalyzes the covalent attachment VPg with viral RNAs. Capsid protein VP60 self assembles to form an icosahedral capsid with a T=3 symmetry, about 35 nm in diameter, and consisting of 180 capsid proteins. A smaller form of capsid with a diameter of 23 nm might be capsid proteins assembled as icosahedron with T=1 symmetry. The capsid encapsulate VP2 proteins and genomic or subgenomic RNA. Attaches virion to target cells by binding histo-blood group antigens, inducing endocytosis of the viral particle. Acidification of the endosome induces conformational change of capsid protein thereby injecting virus genomic RNA into host cytoplasm. The polypeptide is Genome polyprotein (Oryctolagus cuniculus (Rabbit)).